A 63-amino-acid chain; its full sequence is U7-theraphotoxin-Cg1a (63 aa).

Positions 1–21 (MKTSILFVIFGLALLFALSVA) are cleaved as a signal peptide. A propeptide spanning residues 22–31 (IEMEEEETDR) is cleaved from the precursor. Disulfide bonds link C33-C47, C40-C52, and C46-C59.

Expressed by the venom gland.

The protein resides in the secreted. In terms of biological role, inhibits preferentially tetrodotoxin-insensitive sodium currents (Nav) on rat cardiac myocytes (IC(50) is 0.26 uM) and has weaker inhibition activity toward tetrodotoxin-sensitive sodium currents on rat dorsal root ganglion (DRG) sensory neurons (IC(50) is 0.83 uM) and on cockroach dorsal unpaired median (DUM) neurons (IC(50) is 1.19 uM). Has no significant effect on potassium currents on DRG neurons. The sequence is that of U7-theraphotoxin-Cg1a from Chilobrachys guangxiensis (Chinese earth tiger tarantula).